We begin with the raw amino-acid sequence, 793 residues long: Acetyl-CoA decarbonylase/synthase complex subunit alpha (793 aa).

4 residues coordinate [4Fe-4S] cluster: C55, C58, C63, and C73. H96 lines the CO pocket. Residues H229, C257, and C309 each contribute to the [Ni-4Fe-4S] cluster site. 4Fe-4S ferredoxin-type domains are found at residues 393-422 and 432-461; these read EQQF…ISEM and EPFS…LKLY. Residues C403, C406, C409, C413, C441, C444, C447, and C451 each contribute to the [4Fe-4S] cluster site. The [Ni-4Fe-4S] cluster site is built by C509, C538, and C573.

The protein belongs to the Ni-containing carbon monoxide dehydrogenase family. Heterotetramer of two alpha and two epsilon subunits. The ACDS complex is made up of alpha, epsilon, beta, gamma and delta subunits with a probable stoichiometry of (alpha(2)epsilon(2))(4)-beta(8)-(gamma(1)delta(1))(8). [4Fe-4S] cluster serves as cofactor. Requires [Ni-4Fe-4S] cluster as cofactor.

It catalyses the reaction CO + 2 oxidized [2Fe-2S]-[ferredoxin] + H2O = 2 reduced [2Fe-2S]-[ferredoxin] + CO2 + 2 H(+). Its function is as follows. Part of the ACDS complex that catalyzes the reversible cleavage of acetyl-CoA, allowing autotrophic growth from CO(2). The alpha-epsilon subcomponent functions as a carbon monoxide dehydrogenase. This chain is Acetyl-CoA decarbonylase/synthase complex subunit alpha, found in Methanothrix soehngenii (Methanosaeta concilii).